The sequence spans 226 residues: Ribonuclease 3 (226 aa).

Residues 7–129 (LPRLCRTLGY…IIGAIYLDSD (123 aa)) enclose the RNase III domain. Glutamate 42 contributes to the Mg(2+) binding site. Aspartate 46 is a catalytic residue. Aspartate 115 and glutamate 118 together coordinate Mg(2+). Residue glutamate 118 is part of the active site. Residues 156–226 (DAKTLLQEYL…AAQVLELLKK (71 aa)) form the DRBM domain.

It belongs to the ribonuclease III family. In terms of assembly, homodimer. Mg(2+) serves as cofactor.

The protein localises to the cytoplasm. It catalyses the reaction Endonucleolytic cleavage to 5'-phosphomonoester.. Functionally, digests double-stranded RNA. Involved in the processing of primary rRNA transcript to yield the immediate precursors to the large and small rRNAs (23S and 16S). Processes some mRNAs, and tRNAs when they are encoded in the rRNA operon. Processes pre-crRNA and tracrRNA of type II CRISPR loci if present in the organism. This chain is Ribonuclease 3, found in Shewanella sp. (strain ANA-3).